The chain runs to 306 residues: Putative transcriptional regulator (306 aa).

The HTH lysR-type domain occupies 1–61; it reads MIKRNLNDLL…TRTTRSVSPT (61 aa). A DNA-binding region (H-T-H motif) is located at residues 21–40; that stretch reads FTRAAAQLGVTQSALSQSIS.

Belongs to the LysR transcriptional regulatory family.

In terms of biological role, may have a role in the regulation of oprD expression. The polypeptide is Putative transcriptional regulator (Pseudomonas aeruginosa (strain ATCC 15692 / DSM 22644 / CIP 104116 / JCM 14847 / LMG 12228 / 1C / PRS 101 / PAO1)).